A 296-amino-acid chain; its full sequence is F-box only protein 2 (296 aa).

The interval 1-41 (MDGDGDPESVGQPEEASPEEQPEEASAEEERPEDQQEEEAA) is disordered. Acidic residues predominate over residues 16 to 40 (ASPEEQPEEASAEEERPEDQQEEEA). Residues 44–91 (AAYLDELPEPLLLRVLAALPAAELVQACRLVCLRWKELVDGAPLWLLK) enclose the F-box domain. One can recognise an FBA domain in the interval 113–296 (FYFLSKRRRN…VTNSSVWVEP (184 aa)). Residues 210–212 (RSD) and 278–279 (YW) each bind a carbohydrate.

In terms of assembly, component of the SCF(FBXO2) complex consisting of CUL1, RBX1, SKP1 and FBXO2. Predominantly detected as heterodimer with SKP1; the heterodimer with SKP1 is not part of the SCF(FBXO2) complex.

It localises to the cytoplasm. The protein localises to the microsome membrane. The protein operates within protein modification; protein ubiquitination. Functionally, substrate recognition component of a SCF (SKP1-CUL1-F-box protein) E3 ubiquitin-protein ligase complex that mediates the ubiquitination and subsequent proteasomal degradation of target proteins. Involved in the endoplasmic reticulum-associated degradation pathway (ERAD) for misfolded lumenal proteins by recognizing and binding sugar chains on unfolded glycoproteins that are retrotranslocated into the cytosol and promoting their ubiquitination and subsequent degradation. Prevents formation of cytosolic aggregates of unfolded glycoproteins that have been retrotranslocated into the cytosol. Able to recognize and bind denatured glycoproteins, preferentially those of the high-mannose type. This is F-box only protein 2 (FBXO2) from Homo sapiens (Human).